Reading from the N-terminus, the 200-residue chain is Potassium-transporting ATPase KdpC subunit (200 aa).

Residues 6-26 traverse the membrane as a helical segment; it reads PAVVLLILLTLITGIAYPLLT.

Belongs to the KdpC family. As to quaternary structure, the system is composed of three essential subunits: KdpA, KdpB and KdpC.

Its subcellular location is the cell inner membrane. Its function is as follows. Part of the high-affinity ATP-driven potassium transport (or Kdp) system, which catalyzes the hydrolysis of ATP coupled with the electrogenic transport of potassium into the cytoplasm. This subunit acts as a catalytic chaperone that increases the ATP-binding affinity of the ATP-hydrolyzing subunit KdpB by the formation of a transient KdpB/KdpC/ATP ternary complex. The sequence is that of Potassium-transporting ATPase KdpC subunit from Yersinia enterocolitica serotype O:8 / biotype 1B (strain NCTC 13174 / 8081).